A 147-amino-acid polypeptide reads, in one-letter code: uncharacterized protein (147 aa).

Positions 4-120 (KWAKRFFQMA…EQTEDFLSRW (117 aa)) constitute a CMP/dCMP-type deaminase domain. His-67 is a Zn(2+) binding site. Glu-69 acts as the Proton donor in catalysis. 2 residues coordinate Zn(2+): Cys-92 and Cys-95.

The protein belongs to the cytidine and deoxycytidylate deaminase family. Zn(2+) serves as cofactor.

This is an uncharacterized protein from Aliivibrio fischeri (Vibrio fischeri).